Here is a 945-residue protein sequence, read N- to C-terminus: Isoleucine--tRNA ligase (945 aa).

Positions 66 to 76 (PYANGDIHLGH) match the 'HIGH' region motif. Residue E581 participates in L-isoleucyl-5'-AMP binding. The short motif at 622–626 (KMSKS) is the 'KMSKS' region element. An ATP-binding site is contributed by K625. Residues C908, C911, C928, and C931 each contribute to the Zn(2+) site.

It belongs to the class-I aminoacyl-tRNA synthetase family. IleS type 1 subfamily. In terms of assembly, monomer. Zn(2+) serves as cofactor.

The protein resides in the cytoplasm. The enzyme catalyses tRNA(Ile) + L-isoleucine + ATP = L-isoleucyl-tRNA(Ile) + AMP + diphosphate. Functionally, catalyzes the attachment of isoleucine to tRNA(Ile). As IleRS can inadvertently accommodate and process structurally similar amino acids such as valine, to avoid such errors it has two additional distinct tRNA(Ile)-dependent editing activities. One activity is designated as 'pretransfer' editing and involves the hydrolysis of activated Val-AMP. The other activity is designated 'posttransfer' editing and involves deacylation of mischarged Val-tRNA(Ile). The chain is Isoleucine--tRNA ligase from Burkholderia lata (strain ATCC 17760 / DSM 23089 / LMG 22485 / NCIMB 9086 / R18194 / 383).